A 583-amino-acid polypeptide reads, in one-letter code: MERSMYAGRVRSEHIGTTITLKGWVSRRRNLGGLIFIDLRDREGLMQLVVNPENADAAVVETAESLRSEFVIEVTGTVEAREQANDNLPTGAVELKVEDLKVLNTAKTTPFEIKDGVEASDDTRMRYRYLDLRRPEMLENFKLRAKVTHTIRNYLDDLEFIDVETPMLTKSTPEGARDYLVPSRVSQGHFYALPQSPQITKQLLMNAGFDRYYQIVKCFRDEDLRGDRQPEFTQVDLETSFLNEQEIQDITEGLIAKVMKETKGVEVTLPFPRMSYDDAMNNYGSDKPDTRFDMLLQDLTELVKDIDFKVFAEAPAVKAIVVKGNADKYSRKSIDKLTDFAKQFGAKGLAWVKMTDGVLAGPVAKFLTSIEEKLTDTLQIEENDLVLFVADTLEIANNTLGALRNQIAKELDMIDNTKFNFLWVVDWPMFEWSEEEGRYMSAHHPFTLPTEDSAAELEGDLSKVRAVAYDIVLNGYELGGGSLRINQKDLQERMLKALGFSEESAYEQFGFLLEAMDYGFPPHGGLALGLDRFVMLLAGKDNIREVIAFPKNNKASDPMTQAPSLVADKQLEELALHVELENE.

Glu-174 serves as a coordination point for L-aspartate. The interval Gln-198 to Lys-201 is aspartate. Arg-220 is a binding site for L-aspartate. ATP-binding positions include Arg-220–Glu-222 and Gln-229. Residue His-443 coordinates L-aspartate. Glu-477 contacts ATP. Residue Arg-484 coordinates L-aspartate. Gly-529–Arg-532 contributes to the ATP binding site.

The protein belongs to the class-II aminoacyl-tRNA synthetase family. Type 1 subfamily. Homodimer.

The protein resides in the cytoplasm. The catalysed reaction is tRNA(Asp) + L-aspartate + ATP = L-aspartyl-tRNA(Asp) + AMP + diphosphate. Catalyzes the attachment of L-aspartate to tRNA(Asp) in a two-step reaction: L-aspartate is first activated by ATP to form Asp-AMP and then transferred to the acceptor end of tRNA(Asp). The chain is Aspartate--tRNA ligase from Streptococcus thermophilus (strain CNRZ 1066).